Reading from the N-terminus, the 294-residue chain is HTH-type transcriptional regulator TcbR (294 aa).

The HTH lysR-type domain maps to 1–58 (MEFRQLKYFIAVAEAGNMAAAAKRLHVSQPPITRQMQALEADLGVVLLERSHRGIELT). The segment at residues 18–37 (MAAAAKRLHVSQPPITRQMQ) is a DNA-binding region (H-T-H motif).

It belongs to the LysR transcriptional regulatory family.

Functionally, involved in regulation of chlorinated catechol metabolism. Transcriptional activator of the tcbCDEF chlorocatechol oxidative operon. May bind 2-chloromuconate as an inducer. The chain is HTH-type transcriptional regulator TcbR (tcbR) from Pseudomonas sp. (strain P51).